The sequence spans 130 residues: Interferon alpha-inducible protein 27-like protein 2 (130 aa).

3 helical membrane passes run 8-28, 43-63, and 66-86; these read AAVG…AMGF, MSAA…VATL, and VGAA…GSVL. A disordered region spans residues 93-130; sequence SPSSSLPAEPEAKEDEARENVPQGEPPKPPLKSEKHEE.

Belongs to the IFI6/IFI27 family.

The protein resides in the mitochondrion membrane. Plays a role in the apoptotic process and has a pro-apoptotic activity. The chain is Interferon alpha-inducible protein 27-like protein 2 from Homo sapiens (Human).